The chain runs to 294 residues: Homeobox-leucine zipper protein ATHB-13 (294 aa).

Positions methionine 82–glutamine 141 form a DNA-binding region, homeobox. Residues leucine 142 to leucine 177 are leucine-zipper. Residues glutamate 181–threonine 246 form a disordered region. Positions serine 197–aspartate 210 are enriched in low complexity. The segment covering alanine 214–threonine 223 has biased composition (polar residues).

This sequence belongs to the HD-ZIP homeobox family. Class I subfamily. As to expression, predominantly expressed in leaves and flowers.

Its subcellular location is the nucleus. In terms of biological role, probable transcription factor that may act in the sucrose-signaling pathway. In Arabidopsis thaliana (Mouse-ear cress), this protein is Homeobox-leucine zipper protein ATHB-13 (ATHB-13).